The chain runs to 510 residues: GMP synthase [glutamine-hydrolyzing] (510 aa).

The region spanning 5–195 (LVLVIDFGGQ…LFKICGLKED (191 aa)) is the Glutamine amidotransferase type-1 domain. The Nucleophile role is filled by Cys82. Residues His169 and Glu171 contribute to the active site. The GMPS ATP-PPase domain maps to 196–385 (WSMSSFAKEK…LGIPHKLVWR (190 aa)). An ATP-binding site is contributed by 223–229 (SGGVDSS).

In terms of assembly, homodimer.

The catalysed reaction is XMP + L-glutamine + ATP + H2O = GMP + L-glutamate + AMP + diphosphate + 2 H(+). The protein operates within purine metabolism; GMP biosynthesis; GMP from XMP (L-Gln route): step 1/1. Catalyzes the synthesis of GMP from XMP. The protein is GMP synthase [glutamine-hydrolyzing] of Clostridium acetobutylicum (strain ATCC 824 / DSM 792 / JCM 1419 / IAM 19013 / LMG 5710 / NBRC 13948 / NRRL B-527 / VKM B-1787 / 2291 / W).